A 302-amino-acid polypeptide reads, in one-letter code: N-acetylmuramic acid 6-phosphate etherase (302 aa).

The region spanning 57-220 is the SIS domain; that stretch reads VSEKLKNNGR…TTAVMIKLGK (164 aa). The active-site Proton donor is the E85. E116 is a catalytic residue.

Belongs to the GCKR-like family. MurNAc-6-P etherase subfamily. Homodimer.

It catalyses the reaction N-acetyl-D-muramate 6-phosphate + H2O = N-acetyl-D-glucosamine 6-phosphate + (R)-lactate. It participates in amino-sugar metabolism; N-acetylmuramate degradation. In terms of biological role, specifically catalyzes the cleavage of the D-lactyl ether substituent of MurNAc 6-phosphate, producing GlcNAc 6-phosphate and D-lactate. This Clostridium acetobutylicum (strain ATCC 824 / DSM 792 / JCM 1419 / IAM 19013 / LMG 5710 / NBRC 13948 / NRRL B-527 / VKM B-1787 / 2291 / W) protein is N-acetylmuramic acid 6-phosphate etherase.